Consider the following 404-residue polypeptide: Glucose-1-phosphate adenylyltransferase (404 aa).

Alpha-D-glucose 1-phosphate-binding positions include Y99, G164, 179–180 (EK), and S197.

Belongs to the bacterial/plant glucose-1-phosphate adenylyltransferase family.

The catalysed reaction is alpha-D-glucose 1-phosphate + ATP + H(+) = ADP-alpha-D-glucose + diphosphate. The protein operates within capsule biogenesis; capsule polysaccharide biosynthesis. It participates in glycan biosynthesis; glycogen biosynthesis. Involved in the biosynthesis of ADP-glucose, a building block, required in the biosynthesis of maltose-1-phosphate (M1P) and in the elongation reactions to produce linear alpha-1,4-glucans. Catalyzes the reaction between ATP and alpha-D-glucose 1-phosphate (G1P) to produce pyrophosphate and ADP-Glc. In Mycobacterium leprae (strain Br4923), this protein is Glucose-1-phosphate adenylyltransferase.